A 365-amino-acid polypeptide reads, in one-letter code: Glutamate 5-kinase 1 (365 aa).

K9 contributes to the ATP binding site. Residues S49, D136, and N148 each coordinate substrate. ATP contacts are provided by residues T168–D169 and T210–K216. The region spanning S276 to E353 is the PUA domain.

Belongs to the glutamate 5-kinase family.

It localises to the cytoplasm. The enzyme catalyses L-glutamate + ATP = L-glutamyl 5-phosphate + ADP. It participates in amino-acid biosynthesis; L-proline biosynthesis; L-glutamate 5-semialdehyde from L-glutamate: step 1/2. Catalyzes the transfer of a phosphate group to glutamate to form L-glutamate 5-phosphate. The protein is Glutamate 5-kinase 1 of Bacillus licheniformis (strain ATCC 14580 / DSM 13 / JCM 2505 / CCUG 7422 / NBRC 12200 / NCIMB 9375 / NCTC 10341 / NRRL NRS-1264 / Gibson 46).